The following is a 249-amino-acid chain: 5'-nucleotidase SurE (249 aa).

A divalent metal cation-binding residues include aspartate 9, aspartate 10, serine 40, and asparagine 92.

Belongs to the SurE nucleotidase family. It depends on a divalent metal cation as a cofactor.

The protein localises to the cytoplasm. It carries out the reaction a ribonucleoside 5'-phosphate + H2O = a ribonucleoside + phosphate. Functionally, nucleotidase that shows phosphatase activity on nucleoside 5'-monophosphates. The chain is 5'-nucleotidase SurE from Shewanella frigidimarina (strain NCIMB 400).